The sequence spans 273 residues: Phosphatidylglycerol--prolipoprotein diacylglyceryl transferase (273 aa).

7 helical membrane passes run 21 to 41 (VSVRWYGLMYLVGFMFALWLA), 60 to 80 (LLFAGFLGVVIGGRVGYVIFY), 95 to 115 (VWTGGMSFHGGLLGVITAMFW), 124 to 144 (FFGVADFVAPLVPFGLGMGRM), 176 to 196 (SQLYEMFLEGIVLFFILNWFI), 203 to 223 (GAVSGLFLAGYGTFRFLVEFV), and 237 to 257 (ISMGQILSSPMIILGILMMVW). Arg-143 contacts a 1,2-diacyl-sn-glycero-3-phospho-(1'-sn-glycerol).

The protein belongs to the Lgt family.

Its subcellular location is the cell inner membrane. The enzyme catalyses L-cysteinyl-[prolipoprotein] + a 1,2-diacyl-sn-glycero-3-phospho-(1'-sn-glycerol) = an S-1,2-diacyl-sn-glyceryl-L-cysteinyl-[prolipoprotein] + sn-glycerol 1-phosphate + H(+). It functions in the pathway protein modification; lipoprotein biosynthesis (diacylglyceryl transfer). Catalyzes the transfer of the diacylglyceryl group from phosphatidylglycerol to the sulfhydryl group of the N-terminal cysteine of a prolipoprotein, the first step in the formation of mature lipoproteins. The polypeptide is Phosphatidylglycerol--prolipoprotein diacylglyceryl transferase (Vibrio campbellii (strain ATCC BAA-1116)).